Here is a 208-residue protein sequence, read N- to C-terminus: NAD(P)H-quinone oxidoreductase subunit I (208 aa).

4Fe-4S ferredoxin-type domains lie at Gly55 to Val84 and Arg95 to Glu124. [4Fe-4S] cluster contacts are provided by Cys64, Cys67, Cys70, Cys74, Cys104, Cys107, Cys110, and Cys114.

Belongs to the complex I 23 kDa subunit family. NDH-1 is composed of at least 11 different subunits. [4Fe-4S] cluster is required as a cofactor.

Its subcellular location is the cellular thylakoid membrane. It catalyses the reaction a plastoquinone + NADH + (n+1) H(+)(in) = a plastoquinol + NAD(+) + n H(+)(out). The catalysed reaction is a plastoquinone + NADPH + (n+1) H(+)(in) = a plastoquinol + NADP(+) + n H(+)(out). Its function is as follows. NDH-1 shuttles electrons from an unknown electron donor, via FMN and iron-sulfur (Fe-S) centers, to quinones in the respiratory and/or the photosynthetic chain. The immediate electron acceptor for the enzyme in this species is believed to be plastoquinone. Couples the redox reaction to proton translocation, and thus conserves the redox energy in a proton gradient. This chain is NAD(P)H-quinone oxidoreductase subunit I, found in Prochlorococcus marinus (strain MIT 9312).